The chain runs to 343 residues: N-acetyl-gamma-glutamyl-phosphate reductase (343 aa).

The active site involves Cys-149.

The protein belongs to the NAGSA dehydrogenase family. Type 1 subfamily.

The protein resides in the cytoplasm. It carries out the reaction N-acetyl-L-glutamate 5-semialdehyde + phosphate + NADP(+) = N-acetyl-L-glutamyl 5-phosphate + NADPH + H(+). The protein operates within amino-acid biosynthesis; L-arginine biosynthesis; N(2)-acetyl-L-ornithine from L-glutamate: step 3/4. Catalyzes the NADPH-dependent reduction of N-acetyl-5-glutamyl phosphate to yield N-acetyl-L-glutamate 5-semialdehyde. The polypeptide is N-acetyl-gamma-glutamyl-phosphate reductase (Methanococcus maripaludis (strain C7 / ATCC BAA-1331)).